The primary structure comprises 199 residues: Dephospho-CoA kinase (199 aa).

The 197-residue stretch at 3–199 (ILGLTGSIGM…EVVKMPQRRA (197 aa)) folds into the DPCK domain. 11 to 16 (GMGKST) contributes to the ATP binding site.

Belongs to the CoaE family.

The protein resides in the cytoplasm. The enzyme catalyses 3'-dephospho-CoA + ATP = ADP + CoA + H(+). The protein operates within cofactor biosynthesis; coenzyme A biosynthesis; CoA from (R)-pantothenate: step 5/5. Its function is as follows. Catalyzes the phosphorylation of the 3'-hydroxyl group of dephosphocoenzyme A to form coenzyme A. This is Dephospho-CoA kinase from Bradyrhizobium diazoefficiens (strain JCM 10833 / BCRC 13528 / IAM 13628 / NBRC 14792 / USDA 110).